Reading from the N-terminus, the 347-residue chain is tRNA(Ile)-lysidine synthase (347 aa).

27-32 (SGGADS) contributes to the ATP binding site. The interval 243-263 (AAPASPSHVEGEASAPHDAAH) is disordered.

Belongs to the tRNA(Ile)-lysidine synthase family.

It localises to the cytoplasm. It carries out the reaction cytidine(34) in tRNA(Ile2) + L-lysine + ATP = lysidine(34) in tRNA(Ile2) + AMP + diphosphate + H(+). Its function is as follows. Ligates lysine onto the cytidine present at position 34 of the AUA codon-specific tRNA(Ile) that contains the anticodon CAU, in an ATP-dependent manner. Cytidine is converted to lysidine, thus changing the amino acid specificity of the tRNA from methionine to isoleucine. The sequence is that of tRNA(Ile)-lysidine synthase from Nitratidesulfovibrio vulgaris (strain ATCC 29579 / DSM 644 / CCUG 34227 / NCIMB 8303 / VKM B-1760 / Hildenborough) (Desulfovibrio vulgaris).